A 666-amino-acid chain; its full sequence is Pentatricopeptide repeat-containing protein At1g64100 (666 aa).

PPR repeat units lie at residues 105–139, 140–174, 175–209, 225–259, 260–294, 295–329, 330–364, 365–399, 400–430, 431–465, 466–500, 501–535, 536–570, 571–605, and 606–640; these read TAVD…RIPL, NIYS…GFQP, DVVT…GFLE, VVIT…GLHI, DVVT…HIKP, DVVI…GIAP, NVFT…EINP, DVLT…CIFP, DTVT…MASP, DVVT…GLVA, NTTT…GVCP, DTIT…KIDL, DTVA…GVEP, DVQT…GHEP, and DNST…GFSG.

Belongs to the PPR family. P subfamily.

The polypeptide is Pentatricopeptide repeat-containing protein At1g64100 (Arabidopsis thaliana (Mouse-ear cress)).